Reading from the N-terminus, the 202-residue chain is Probable molybdenum cofactor guanylyltransferase (202 aa).

GTP-binding positions include 9–11 (VAG), Lys-22, Asn-50, Asp-77, and Asp-102. Asp-102 is a Mg(2+) binding site.

The protein belongs to the MobA family. Mg(2+) serves as cofactor.

It is found in the cytoplasm. The enzyme catalyses Mo-molybdopterin + GTP + H(+) = Mo-molybdopterin guanine dinucleotide + diphosphate. Functionally, transfers a GMP moiety from GTP to Mo-molybdopterin (Mo-MPT) cofactor (Moco or molybdenum cofactor) to form Mo-molybdopterin guanine dinucleotide (Mo-MGD) cofactor. The chain is Probable molybdenum cofactor guanylyltransferase from Natronomonas pharaonis (strain ATCC 35678 / DSM 2160 / CIP 103997 / JCM 8858 / NBRC 14720 / NCIMB 2260 / Gabara) (Halobacterium pharaonis).